A 132-amino-acid polypeptide reads, in one-letter code: MKRSGIINREIARIAAEMGHMDRITVCDCGFPIPDGAKVVDLSIIKGFPRLIDVLKALREELIIEKIILAKEIVDKNPEMHNAILKLFSDAAVDYVEHSEFKKIAAVSSKAYIRTGEATPYSNVILSSGVDF.

The Proton donor role is filled by histidine 20. Substrate-binding positions include aspartate 28, histidine 98, and 121 to 123 (YSN).

Belongs to the RbsD / FucU family. RbsD subfamily. In terms of assembly, homodecamer.

The protein resides in the cytoplasm. The catalysed reaction is beta-D-ribopyranose = beta-D-ribofuranose. Its pathway is carbohydrate metabolism; D-ribose degradation; D-ribose 5-phosphate from beta-D-ribopyranose: step 1/2. Catalyzes the interconversion of beta-pyran and beta-furan forms of D-ribose. The sequence is that of D-ribose pyranase from Kosmotoga olearia (strain ATCC BAA-1733 / DSM 21960 / TBF 19.5.1).